We begin with the raw amino-acid sequence, 613 residues long: DBH-like monooxygenase protein 1 (613 aa).

Residues 1-19 (MCGWPLLVLWALLPATAAG) form the signal peptide. At 20-587 (SPGRSYPHRV…PLVCEKAASP (568 aa)) the chain is on the lumenal side. Positions 35–148 (GKYWLHWGRQ…STVRVIWAYH (114 aa)) constitute a DOMON domain. N-linked (GlcNAc...) asparagine glycosylation occurs at asparagine 114. The active site involves tyrosine 203. Cystine bridges form between cysteine 205–cysteine 257 and cysteine 242–cysteine 269. The Cu cation site is built by histidine 235 and histidine 236. Asparagine 247 is a glycosylation site (N-linked (GlcNAc...) asparagine). Residues histidine 307, histidine 389, histidine 391, and methionine 464 each contribute to the Cu cation site. 3 disulfides stabilise this stretch: cysteine 364–cysteine 480, cysteine 368–cysteine 550, and cysteine 443–cysteine 465. Histidine 389 is an active-site residue. N-linked (GlcNAc...) asparagine glycans are attached at residues asparagine 476 and asparagine 517. Residues 588–608 (PLHGIFSLRLLTCALLLGSML) form a helical membrane-spanning segment.

It belongs to the copper type II ascorbate-dependent monooxygenase family. The cofactor is Cu(2+). In terms of processing, N-glycosylated. Broadly exprressed, with highest levels in salivary gland and ovary.

The protein localises to the endoplasmic reticulum membrane. This Mus musculus (Mouse) protein is DBH-like monooxygenase protein 1 (Moxd1).